A 158-amino-acid chain; its full sequence is Vasotocin-neurophysin VT 2 (158 aa).

Positions 1–19 (MPHSTLLLCVIGLLAFSSA) are cleaved as a signal peptide. Cysteines 20 and 25 form a disulfide. Glycine 28 is modified (glycine amide). Intrachain disulfides connect cysteine 41–cysteine 85, cysteine 44–cysteine 58, cysteine 52–cysteine 75, cysteine 59–cysteine 65, cysteine 92–cysteine 105, cysteine 99–cysteine 117, and cysteine 106–cysteine 111.

The protein belongs to the vasopressin/oxytocin family. In terms of processing, seven disulfide bonds are present in neurophysin.

The protein resides in the secreted. Its function is as follows. Vasotocin is an antidiuretic hormone. The chain is Vasotocin-neurophysin VT 2 from Oncorhynchus keta (Chum salmon).